The following is a 247-amino-acid chain: Probable transcriptional regulatory protein GTNG_2524 (247 aa).

The span at methionine 1–lysine 14 shows a compositional bias: basic residues. The disordered stretch occupies residues methionine 1 to arginine 21.

Belongs to the TACO1 family.

It localises to the cytoplasm. In Geobacillus thermodenitrificans (strain NG80-2), this protein is Probable transcriptional regulatory protein GTNG_2524.